The following is a 377-amino-acid chain: Flagellin C (377 aa).

Coiled-coil stretches lie at residues 103-129 (SNSK…IAET) and 301-340 (VDSH…KDTD).

This sequence belongs to the bacterial flagellin family. In terms of assembly, heteromer of multiple flagellin subunits including FlaA, FlaB, FlaC, FlaD and possibly FlaE.

It is found in the secreted. The protein localises to the bacterial flagellum. In terms of biological role, flagellin is the subunit protein which polymerizes to form the filaments of bacterial flagella. FlaC is not essential for flagellar synthesis and motility. The sequence is that of Flagellin C (flaC) from Vibrio anguillarum (Listonella anguillarum).